The following is a 222-amino-acid chain: Interleukin-12 subunit alpha (222 aa).

Residues 1 to 25 (MCPPRGLLLVAILVLLNHLDHLSLA) form the signal peptide. Disulfide bonds link C40–C113, C67–C199, and C88–C126. 3 N-linked (GlcNAc...) asparagine glycosylation sites follow: N42, N96, and N110.

It belongs to the IL-6 superfamily. As to quaternary structure, heterodimer with IL12B; disulfide-linked. This heterodimer is known as interleukin IL-12. Heterodimer with EBI3/IL27B; not disulfide-linked. This heterodimer is known as interleukin IL-35. Interacts with NBR1; this interaction promotes IL-12 secretion.

The protein resides in the secreted. Its function is as follows. Heterodimerizes with IL12B to form the IL-12 cytokine or with EBI3/IL27B to form the IL-35 cytokine. IL-12 is primarily produced by professional antigen-presenting cells (APCs) such as B-cells and dendritic cells (DCs) as well as macrophages and granulocytes and regulates T-cell and natural killer-cell responses, induces the production of interferon-gamma (IFN-gamma), favors the differentiation of T-helper 1 (Th1) cells and is an important link between innate resistance and adaptive immunity. Mechanistically, exerts its biological effects through a receptor composed of IL12R1 and IL12R2 subunits. Binding to the receptor results in the rapid tyrosine phosphorylation of a number of cellular substrates including the JAK family kinases TYK2 and JAK2. In turn, recruited STAT4 gets phosphorylated and translocates to the nucleus where it regulates cytokine/growth factor responsive genes. As part of IL-35, plays essential roles in maintaining the immune homeostasis of the liver microenvironment and also functions as an immune-suppressive cytokine. Mediates biological events through unconventional receptors composed of IL12RB2 and gp130/IL6ST heterodimers or homodimers. Signaling requires the transcription factors STAT1 and STAT4, which form a unique heterodimer that binds to distinct DNA sites. This is Interleukin-12 subunit alpha (IL12A) from Equus caballus (Horse).